The primary structure comprises 340 residues: N-acetyl-gamma-glutamyl-phosphate reductase (340 aa).

Residue cysteine 151 is part of the active site.

The protein belongs to the NAGSA dehydrogenase family. Type 1 subfamily.

The protein resides in the cytoplasm. It carries out the reaction N-acetyl-L-glutamate 5-semialdehyde + phosphate + NADP(+) = N-acetyl-L-glutamyl 5-phosphate + NADPH + H(+). It functions in the pathway amino-acid biosynthesis; L-arginine biosynthesis; N(2)-acetyl-L-ornithine from L-glutamate: step 3/4. Its function is as follows. Catalyzes the NADPH-dependent reduction of N-acetyl-5-glutamyl phosphate to yield N-acetyl-L-glutamate 5-semialdehyde. The chain is N-acetyl-gamma-glutamyl-phosphate reductase from Aquifex aeolicus (strain VF5).